An 81-amino-acid chain; its full sequence is UPF0181 protein Spro_2806 (81 aa).

Positions 43 to 81 (EKHQGDQVSVMFDDEDDDEEYQERPDDQADDDSEEDENY) are disordered. 2 stretches are compositionally biased toward acidic residues: residues 54 to 63 (FDDEDDDEEY) and 70 to 81 (QADDDSEEDENY).

It belongs to the UPF0181 family.

This chain is UPF0181 protein Spro_2806, found in Serratia proteamaculans (strain 568).